A 493-amino-acid chain; its full sequence is MSFKDLRSFIDHLESQGELKRISHPVDPNLEMTEIADRVLRAKGPALLFENPVGNDMPVLANLFGTPKRVAMALGKEDPLALREVGELLAFLKEPEPPRGFKDAIAKIPMFKQALNMPPKTVRNPPCQQVVKTGEEVDLTKLPIQHCWPGDVAPLVTWGLTITKGPRQKRQNLGIYRQQLLGRDKLIMRWLDHRGGALDFKDFKEKHPGERYPVVVALGSDPVTILGAVTPVPDSMSEYAFAGLLRGERTDVCKAISCDLEVPATSEIILEGYIDPDEMAEEGPYGDHTGYYNETDSFPVFTVTHITHRKDAIYHSTYTGRPPDEPAMLGVALNEVFVPILRKQYPEIIDFYLPPEGCSYRMAVISIRKQYPGHAKRVMMGAWSFLRQFMYTKFIVVVDEDVNCRDWNDVIWAITTRMDPKRDTVMIENTPIDYLDFASPVAGLGSKMGMDATNKWEGETDREWGTPIVMDQAVKDKVDQIWADLGIDDAPTL.

Asn172 contributes to the Mn(2+) binding site. Prenylated FMN is bound by residues 175-177, 189-191, and 194-195; these read IYR, RWL, and RG. Glu238 is a Mn(2+) binding site. The Proton donor role is filled by Asp287.

It belongs to the UbiD family. As to quaternary structure, homohexamer. Prenylated FMN serves as cofactor. Requires Mn(2+) as cofactor.

It is found in the cell membrane. The enzyme catalyses a 4-hydroxy-3-(all-trans-polyprenyl)benzoate + H(+) = a 2-(all-trans-polyprenyl)phenol + CO2. Its pathway is cofactor biosynthesis; ubiquinone biosynthesis. Catalyzes the decarboxylation of 3-octaprenyl-4-hydroxy benzoate to 2-octaprenylphenol, an intermediate step in ubiquinone biosynthesis. This Shewanella woodyi (strain ATCC 51908 / MS32) protein is 3-octaprenyl-4-hydroxybenzoate carboxy-lyase.